The chain runs to 200 residues: Putative manganese exporter (200 aa).

Helical transmembrane passes span threonine 13–glycine 33, isoleucine 53–valine 73, proline 81–isoleucine 101, serine 110–glycine 130, tryptophan 150–glycine 170, and glycine 180–phenylalanine 200.

It belongs to the GDT1 family.

The protein resides in the cell inner membrane. In terms of biological role, involved in manganese homeostasis. May function as a manganese exporter. The protein is Putative manganese exporter of Vibrio cholerae serotype O1 (strain ATCC 39541 / Classical Ogawa 395 / O395).